The sequence spans 153 residues: Superoxide dismutase [Cu-Zn] (153 aa).

Residues histidine 45 and histidine 47 each coordinate Cu cation. Residue threonine 53 is modified to Phosphothreonine. The cysteines at positions 56 and 145 are disulfide-linked. The residue at position 59 (serine 59) is a Phosphoserine. Histidine 62 lines the Cu cation pocket. Positions 62, 70, 79, and 82 each coordinate Zn(2+). Cu cation is bound at residue histidine 119.

Belongs to the Cu-Zn superoxide dismutase family. In terms of assembly, homodimer. The cofactor is Cu cation. Requires Zn(2+) as cofactor.

The protein resides in the cytoplasm. The catalysed reaction is 2 superoxide + 2 H(+) = H2O2 + O2. Functionally, destroys radicals which are normally produced within the cells and which are toxic to biological systems. This is Superoxide dismutase [Cu-Zn] from Drosophila melanogaster (Fruit fly).